Consider the following 2138-residue polypeptide: Non-reducing polyketide synthase rads2 (2138 aa).

The segment at 11–249 (LIFGDQTDSW…NPLNIHALQH (239 aa)) is N-terminal acylcarrier protein transacylase (SAT) domain. The Ketosynthase family 3 (KS3) domain maps to 373–804 (SGRIAIVGMA…GGNACMLLED (432 aa)). Residues cysteine 549, histidine 684, and histidine 724 each act as for beta-ketoacyl synthase activity in the active site. Residues 901–1184 (VFVFGGQGSH…KGVCTSFVRA (284 aa)) form a malonyl-CoA:ACP transacylase (MAT) domain region. The active-site For acyl/malonyl transferase activity is serine 992. Residues 1291–1437 (AQYVVQESPS…KDVQRLQADW (147 aa)) are N-terminal hotdog fold. In terms of domain architecture, PKS/mFAS DH spans 1291–1610 (AQYVVQESPS…FHEISNATLK (320 aa)). The tract at residues 1303 to 1607 (KKIQVTFRAS…GLEFHEISNA (305 aa)) is product template (PT) domain. A C-terminal hotdog fold region spans residues 1459 to 1610 (HGHRFQPDIF…FHEISNATLK (152 aa)). Residues 1618–1666 (SKSVLKPDNAAPLKAPEKKEDATPTAPKKSADPGKEEEEEGDTATPAAV) are disordered. The Carrier domain occupies 1666–1740 (VGEFEVIIQT…DLRRAFAMAP (75 aa)). Serine 1700 is modified (O-(pantetheine 4'-phosphoryl)serine). Residues 1740-1771 (PSSSSSTSASESVSESLDDSSSTSRSATPSSS) show a composition bias toward low complexity. Disordered regions lie at residues 1740–1781 (PSSS…GFVE) and 1807–1828 (QATK…SSPA). Residues 1860–2006 (ADGTGSIATY…TRRHLGAMFS (147 aa)) form a thioesterase (TE) domain region.

It functions in the pathway secondary metabolite biosynthesis. Its function is as follows. Non-reducing polyketide synthase; part of the gene cluster that mediates the biosynthesis of radicicol, a resorcylic acid lactone (RAL) that irreversibly inhibits the HSP90 molecular chaperone, an important target for cancer chemotherapy. The cluster encodes only two apparent post-PKS enzymes, a cytochrome P450 monooxygenase (radP) and a non-heme halogenase (radH) that introduce the epoxide and the chlorine, respectively. If this cluster includes all the genes required for radicicol biosynthesis, the remaining structural features of radicicol are presumably generated by the PKSs rads1 and rads2. The C-2' ketone could arise if the R-PKS rads1 and NR-PKS rads2 each carry out four iterations, in contrast to the five iteration-three iteration split for the hypothemycin PKSs. The origin of the cis 5',6' double bond is not known. The radicicol R-PKS rads1 ER domain may catalyze either double bond isomerization or reduction in the third iteration. This chain is Non-reducing polyketide synthase rads2, found in Floropilus chiversii (Chaetomium chiversii).